A 354-amino-acid polypeptide reads, in one-letter code: MDSLLELNRVNTAREIIRKKIQNTGRNSIYDLTGLCGGFEICEENLKLIETYVGPAIFSEKLNNAGLSHLSGNSKIHNAVCFNRTSSAILSTIMTLSKSFEKLVHYVPEKPAHPSIPRSCKIFGMEYFESDSLEEILSKIDENSFTAITGATMDHKVVSEEIACKIIDYAKSKNSPVFFDDASGARLRKLYKESPALEMGADLVVTSMDKLMDGPRAGLLAGDKNLVDKIYSEGLKFGLEAQAPIMAAVVTALERFDLNNLKDAFERAEKVDLSVFEAEKIEYKKTPTGFIIKNSSEEKLIETALKLLENYGIVTITAAGMPGASKNIRIDFCSKDAERISDEYVINAVLNSLK.

K210 is subject to N6-(pyridoxal phosphate)lysine.

Belongs to the UPF0425 family. It depends on pyridoxal 5'-phosphate as a cofactor.

The protein is UPF0425 pyridoxal phosphate-dependent protein MMP0002 of Methanococcus maripaludis (strain DSM 14266 / JCM 13030 / NBRC 101832 / S2 / LL).